The sequence spans 178 residues: Oligoribonuclease (178 aa).

The 162-residue stretch at 7–168 (LIWIDLEMTG…DDIRESIAEL (162 aa)) folds into the Exonuclease domain. Tyr-128 is a catalytic residue.

The protein belongs to the oligoribonuclease family.

Its subcellular location is the cytoplasm. 3'-to-5' exoribonuclease specific for small oligoribonucleotides. In Francisella tularensis subsp. novicida (strain U112), this protein is Oligoribonuclease.